The following is a 267-amino-acid chain: MAPRPAMSHSSAFLLPSPSAAAAGADADGAAYALLVLNQRLPRFAPRLWDRAQVRVCADGGANRVFDGMPELFPGQDPDEVRRRYKPDVIKGDLDSVRPEVKEYYSNMGTQIVDESHDQDTTDLHKCVAFITENSAIPNKSNLCIFALGALGGRFDHEMGNINVLHLFPNNRIILLSDDCLIFLLPRTHTHNIHIERSIEGPHCGLIPIGAPSATTTTTGLQWNLDNTSMSFGGLISTSNIVREESTVVTITSDSDLIWTISLRHHS.

It belongs to the thiamine pyrophosphokinase family.

It localises to the cytoplasm. The protein localises to the cytosol. It catalyses the reaction thiamine + ATP = thiamine diphosphate + AMP + H(+). The protein operates within cofactor biosynthesis; thiamine diphosphate biosynthesis; thiamine diphosphate from thiamine: step 1/1. Its function is as follows. Catalyzes the phosphorylation of thiamine to thiamine pyrophosphate (TPP). TPP is an active cofactor for enzymes involved in glycolysis and energy production. Plant leaves require high levels of TPP for photosynthesis and carbohydrate metabolism. The protein is Thiamine pyrophosphokinase 3 (TPK3) of Oryza sativa subsp. japonica (Rice).